The primary structure comprises 362 residues: Manganese peroxidase 3 (362 aa).

Residues 1–18 (MAFKQLLTAISIVSVANA) form the signal peptide. Residues 19 to 23 (ALTRR) constitute a propeptide that is removed on maturation. Intrachain disulfides connect C26-C39, C38-C309, C58-C144, and C273-C338. Residues E60 and E64 each coordinate Mn(2+). H71 functions as the Proton acceptor in the catalytic mechanism. Residues D72, G90, D92, and S94 each coordinate Ca(2+). A glycan (N-linked (GlcNAc...) asparagine) is linked at N126. H200 contributes to the heme b binding site. Position 201 (T201) interacts with Ca(2+). D206 contacts Mn(2+). 4 residues coordinate Ca(2+): D218, T220, I223, and D225. A disordered region spans residues 341–362 (TPFPSLSADPGPATSVAPVPPS).

Belongs to the peroxidase family. Ligninase subfamily. The cofactor is heme b. Requires Ca(2+) as cofactor.

It localises to the secreted. It carries out the reaction 2 Mn(2+) + H2O2 + 2 H(+) = 2 Mn(3+) + 2 H2O. Catalyzes the oxidation of Mn(2+) to Mn(3+). The latter, acting as a diffusible redox mediator, is capable of oxidizing a variety of lignin compounds. This isozyme is also able to oxidize phenols and amines in the absence of Mn(2+), similar to versatile peroxidases. This Phlebia radiata (White-rot fungus) protein is Manganese peroxidase 3 (mnp3).